Reading from the N-terminus, the 818-residue chain is G-type lectin S-receptor-like serine/threonine-protein kinase At1g67520 (818 aa).

An N-terminal signal peptide occupies residues 1 to 22; sequence MCSNGIFVSLLTLSLLLGKSCS. Topologically, residues 23–387 are extracellular; sequence ETDTLHQGQF…NENKKVAAWH (365 aa). Residues 24–149 form the Bulb-type lectin domain; the sequence is TDTLHQGQFL…DADGSMKRVL (126 aa). N-linked (GlcNAc...) asparagine glycans are attached at residues asparagine 123, asparagine 199, and asparagine 337. Positions 290-379 constitute a PAN domain; the sequence is CLAAGYVVRD…PRTIYIRGNE (90 aa). Cystine bridges form between cysteine 330-cysteine 353 and cysteine 334-cysteine 340. A helical membrane pass occupies residues 388–408; the sequence is IVVATLFLMTPIIWFIIYLVL. The Cytoplasmic segment spans residues 409 to 818; it reads RKFNVKGRNC…SITITVLEAR (410 aa). The 290-residue stretch at 496–785 folds into the Protein kinase domain; the sequence is FSDENKLGEG…ALSLPKEPAF (290 aa). Residues 502–510 and lysine 524 each bind ATP; that span reads LGEGGFGPV. Serine 530 bears the Phosphoserine mark. The caM-binding stretch occupies residues 585–602; sequence LRKNVLDWTLRFRIMEGI. The active-site Proton acceptor is aspartate 621. 2 positions are modified to phosphoserine: serine 625 and serine 638. Phosphothreonine is present on threonine 655. A phosphoserine mark is found at serine 699 and serine 807. At threonine 813 the chain carries Phosphothreonine.

The protein belongs to the protein kinase superfamily. Ser/Thr protein kinase family.

It localises to the cell membrane. It carries out the reaction L-seryl-[protein] + ATP = O-phospho-L-seryl-[protein] + ADP + H(+). It catalyses the reaction L-threonyl-[protein] + ATP = O-phospho-L-threonyl-[protein] + ADP + H(+). The protein is G-type lectin S-receptor-like serine/threonine-protein kinase At1g67520 of Arabidopsis thaliana (Mouse-ear cress).